A 241-amino-acid chain; its full sequence is GTP cyclohydrolase 1 (241 aa).

A propeptide spanning residues 1 to 11 (MEKPRGVRCTN) is cleaved from the precursor. A disordered region spans residues 1-58 (MEKPRGVRCTNGFPERELPRPGASRPAEKSRPPEAKGAQPADAWKAGRPRSEEDNELN). Phosphoserine is present on residues serine 51 and serine 72. Zn(2+) contacts are provided by cysteine 132, histidine 135, and cysteine 203.

It belongs to the GTP cyclohydrolase I family. As to quaternary structure, toroid-shaped homodecamer, composed of two pentamers of five dimers. Interacts with AHSA1 and GCHFR/GFRP. In terms of processing, phosphorylated.

The protein resides in the cytoplasm. The protein localises to the nucleus. The catalysed reaction is GTP + H2O = 7,8-dihydroneopterin 3'-triphosphate + formate + H(+). It participates in cofactor biosynthesis; 7,8-dihydroneopterin triphosphate biosynthesis; 7,8-dihydroneopterin triphosphate from GTP: step 1/1. With respect to regulation, GTP shows a positive allosteric effect, and tetrahydrobiopterin inhibits the enzyme activity. Zinc is required for catalytic activity. Inhibited by Mg(2+). May positively regulate nitric oxide synthesis in endothelial cells. May be involved in dopamine synthesis. May modify pain sensitivity and persistence. The protein is GTP cyclohydrolase 1 (Gch1) of Rattus norvegicus (Rat).